A 712-amino-acid chain; its full sequence is Eukaryotic translation initiation factor 3 subunit B (712 aa).

Position 1 is an N-acetylmethionine (methionine 1). In terms of domain architecture, RRM spans 56-143 (NIIVVDHLPV…HIFAVNMFDD (88 aa)).

This sequence belongs to the eIF-3 subunit B family. Component of the eukaryotic translation initiation factor 3 (eIF-3) complex, which is composed of at least 13 different subunits. Binds to the translation initiation factor TIF3H1.

Its subcellular location is the cytoplasm. Functionally, RNA-binding component of the eukaryotic translation initiation factor 3 (eIF-3) complex, which is involved in protein synthesis of a specialized repertoire of mRNAs and, together with other initiation factors, stimulates binding of mRNA and methionyl-tRNAi to the 40S ribosome. The eIF-3 complex specifically targets and initiates translation of a subset of mRNAs involved in cell proliferation. This Arabidopsis thaliana (Mouse-ear cress) protein is Eukaryotic translation initiation factor 3 subunit B (TIF3B1).